Here is a 193-residue protein sequence, read N- to C-terminus: Xanthine phosphoribosyltransferase (193 aa).

Xanthine-binding residues include Leu20 and Thr27. 128–132 (ANGQA) contacts 5-phospho-alpha-D-ribose 1-diphosphate. Lys156 is a xanthine binding site.

This sequence belongs to the purine/pyrimidine phosphoribosyltransferase family. Xpt subfamily. As to quaternary structure, homodimer.

The protein localises to the cytoplasm. It carries out the reaction XMP + diphosphate = xanthine + 5-phospho-alpha-D-ribose 1-diphosphate. It functions in the pathway purine metabolism; XMP biosynthesis via salvage pathway; XMP from xanthine: step 1/1. In terms of biological role, converts the preformed base xanthine, a product of nucleic acid breakdown, to xanthosine 5'-monophosphate (XMP), so it can be reused for RNA or DNA synthesis. The sequence is that of Xanthine phosphoribosyltransferase from Streptococcus pneumoniae serotype 4 (strain ATCC BAA-334 / TIGR4).